A 396-amino-acid polypeptide reads, in one-letter code: Probable sugar efflux transporter (396 aa).

A run of 12 helical transmembrane segments spans residues 15 to 35, 50 to 70, 81 to 101, 103 to 123, 136 to 156, 170 to 190, 209 to 229, 246 to 266, 275 to 295, 299 to 319, 333 to 353, and 364 to 384; these read VVTL…PVGL, VGIM…PFML, LICL…SWSF, VLVI…SITA, AQAL…GLPL, FFAI…LLPL, PALM…YTAY, FATA…VIFG, ALVS…LPAA, IHLG…GLGM, VAMA…ALVG, and MIGY…IIIF.

Belongs to the major facilitator superfamily. SotB (TC 2.A.1.2) family.

It is found in the cell inner membrane. Involved in the efflux of sugars. The physiological role may be the reduction of the intracellular concentration of toxic sugars or sugar metabolites. This is Probable sugar efflux transporter from Escherichia coli O139:H28 (strain E24377A / ETEC).